Here is a 213-residue protein sequence, read N- to C-terminus: Thiamine-phosphate synthase (213 aa).

Residues glutamine 39 to lysine 43 and asparagine 71 contribute to the 4-amino-2-methyl-5-(diphosphooxymethyl)pyrimidine site. Residues aspartate 72 and aspartate 91 each contribute to the Mg(2+) site. 4-amino-2-methyl-5-(diphosphooxymethyl)pyrimidine is bound at residue serine 110. Threonine 136–threonine 138 contributes to the 2-[(2R,5Z)-2-carboxy-4-methylthiazol-5(2H)-ylidene]ethyl phosphate binding site. Residue lysine 139 participates in 4-amino-2-methyl-5-(diphosphooxymethyl)pyrimidine binding. Residues glycine 166 and valine 186–serine 187 each bind 2-[(2R,5Z)-2-carboxy-4-methylthiazol-5(2H)-ylidene]ethyl phosphate.

It belongs to the thiamine-phosphate synthase family. It depends on Mg(2+) as a cofactor.

The enzyme catalyses 2-[(2R,5Z)-2-carboxy-4-methylthiazol-5(2H)-ylidene]ethyl phosphate + 4-amino-2-methyl-5-(diphosphooxymethyl)pyrimidine + 2 H(+) = thiamine phosphate + CO2 + diphosphate. It carries out the reaction 2-(2-carboxy-4-methylthiazol-5-yl)ethyl phosphate + 4-amino-2-methyl-5-(diphosphooxymethyl)pyrimidine + 2 H(+) = thiamine phosphate + CO2 + diphosphate. It catalyses the reaction 4-methyl-5-(2-phosphooxyethyl)-thiazole + 4-amino-2-methyl-5-(diphosphooxymethyl)pyrimidine + H(+) = thiamine phosphate + diphosphate. It participates in cofactor biosynthesis; thiamine diphosphate biosynthesis; thiamine phosphate from 4-amino-2-methyl-5-diphosphomethylpyrimidine and 4-methyl-5-(2-phosphoethyl)-thiazole: step 1/1. Condenses 4-methyl-5-(beta-hydroxyethyl)thiazole monophosphate (THZ-P) and 2-methyl-4-amino-5-hydroxymethyl pyrimidine pyrophosphate (HMP-PP) to form thiamine monophosphate (TMP). In Clostridium botulinum (strain Eklund 17B / Type B), this protein is Thiamine-phosphate synthase.